The following is an 836-amino-acid chain: Translation initiation factor IF-2 (836 aa).

The tract at residues Met-1 to Gln-233 is disordered. Residues Ser-18 to His-27 show a composition bias toward polar residues. Over residues Ser-50–Ser-60 the composition is skewed to low complexity. A compositionally biased stretch (basic and acidic residues) spans Lys-88–Arg-156. Residues Pro-167–Pro-176 are compositionally biased toward low complexity. Residues Ser-185–Arg-206 are compositionally biased toward basic and acidic residues. In terms of domain architecture, tr-type G spans Pro-333–Asp-501. Residues Gly-342–Thr-349 form a G1 region. Residue Gly-342–Thr-349 coordinates GTP. The tract at residues Gly-367–His-371 is G2. The interval Asp-389–Gly-392 is G3. Residues Asp-389 to His-393 and Asn-443 to Asp-446 contribute to the GTP site. The tract at residues Asn-443–Asp-446 is G4. Residues Ser-479 to Lys-481 form a G5 region.

This sequence belongs to the TRAFAC class translation factor GTPase superfamily. Classic translation factor GTPase family. IF-2 subfamily.

The protein resides in the cytoplasm. Functionally, one of the essential components for the initiation of protein synthesis. Protects formylmethionyl-tRNA from spontaneous hydrolysis and promotes its binding to the 30S ribosomal subunits. Also involved in the hydrolysis of GTP during the formation of the 70S ribosomal complex. The chain is Translation initiation factor IF-2 from Cereibacter sphaeroides (strain ATCC 17023 / DSM 158 / JCM 6121 / CCUG 31486 / LMG 2827 / NBRC 12203 / NCIMB 8253 / ATH 2.4.1.) (Rhodobacter sphaeroides).